Consider the following 238-residue polypeptide: MIHQLLAEFMGTALMIIFGVGVHCSEVLKGTKYRGSGHIFAITTWGFGITIALFIFGNVCINPAMVLAQCILGNLSWSLFIPYSVAEVLGGVVGAVIVWIMYADHFAASADEISPITIRNLFSTAPAVRNLPRNFFVEFFDTFIFISGILAISEVKTPGIVPIGVGLLVWAIGMGLGGPTGFAMNLARDMGPRIAHAILPIKNKADSDWQYGIIVPGIAPFVGAACAALFMHGFFGIG.

Helical transmembrane passes span Ile-2–Val-22 and Ile-39–Val-59. The NPA 1 signature appears at Asn-62–Ala-64. Helical transmembrane passes span Phe-80 to Ile-100, Phe-135 to Val-155, and Pro-158 to Gly-178. The NPA 2 signature appears at Asn-185–Ala-187. A helical transmembrane segment spans residues Tyr-211–Met-231.

The protein belongs to the MIP/aquaporin (TC 1.A.8) family.

The protein resides in the cell membrane. Its function is as follows. Transporter that facilitates the transmembrane diffusion of water, dihydroxyacetone, glycerol, urea, H(2)O(2) and D/L-lactic acid. Is involved in the cellular racemization of lactate and lactate metabolism, but has likely a more general physiological role. The transported molecule is indeed lactic acid and not the lactate anion, in agreement with the assumption that, with very few exceptions, MIPs (major intrinsic proteins) only facilitate the transport of uncharged solutes. The polypeptide is Glycerol uptake facilitator protein 4 (Lactiplantibacillus plantarum (strain ATCC BAA-793 / NCIMB 8826 / WCFS1) (Lactobacillus plantarum)).